Here is a 256-residue protein sequence, read N- to C-terminus: Thiazole synthase (256 aa).

The active-site Schiff-base intermediate with DXP is the lysine 96. Residues glycine 157, alanine 183–glycine 184, and asparagine 205–threonine 206 each bind 1-deoxy-D-xylulose 5-phosphate.

Belongs to the ThiG family. In terms of assembly, homotetramer. Forms heterodimers with either ThiH or ThiS.

It localises to the cytoplasm. It carries out the reaction [ThiS sulfur-carrier protein]-C-terminal-Gly-aminoethanethioate + 2-iminoacetate + 1-deoxy-D-xylulose 5-phosphate = [ThiS sulfur-carrier protein]-C-terminal Gly-Gly + 2-[(2R,5Z)-2-carboxy-4-methylthiazol-5(2H)-ylidene]ethyl phosphate + 2 H2O + H(+). It functions in the pathway cofactor biosynthesis; thiamine diphosphate biosynthesis. Its function is as follows. Catalyzes the rearrangement of 1-deoxy-D-xylulose 5-phosphate (DXP) to produce the thiazole phosphate moiety of thiamine. Sulfur is provided by the thiocarboxylate moiety of the carrier protein ThiS. In vitro, sulfur can be provided by H(2)S. This Bacillus anthracis protein is Thiazole synthase.